The following is a 238-amino-acid chain: Cysteine-rich venom protein kaouthin-2 (238 aa).

The signal sequence occupies residues 1–19 (MIAFIVLLSLAAVLQQSSG). Positions 20–25 (TVDFAS) are excised as a propeptide. In terms of domain architecture, SCP spans 38-164 (VDKHNALRRS…SSKYLYVCQY (127 aa)). 8 disulfides stabilise this stretch: cysteine 75/cysteine 153, cysteine 92/cysteine 165, cysteine 148/cysteine 162, cysteine 184/cysteine 191, cysteine 187/cysteine 196, cysteine 200/cysteine 233, cysteine 209/cysteine 227, and cysteine 218/cysteine 231. The 34-residue stretch at 200 to 233 (CKHHNVFSNCQSLAKQNACQTEWMKSKCAASCFC) folds into the ShKT domain.

Expressed by the venom gland.

It localises to the secreted. This Naja kaouthia (Monocled cobra) protein is Cysteine-rich venom protein kaouthin-2.